The chain runs to 428 residues: Dihydroorotase (428 aa).

Residues histidine 59 and histidine 61 each contribute to the Zn(2+) site. Residues 61–63 and asparagine 93 each bind substrate; that span reads HLR. Aspartate 151, histidine 178, and histidine 231 together coordinate Zn(2+). Asparagine 277 contributes to the substrate binding site. Aspartate 304 serves as a coordination point for Zn(2+). Residue aspartate 304 is part of the active site. Substrate contacts are provided by residues histidine 308 and 322–323; that span reads FG.

It belongs to the metallo-dependent hydrolases superfamily. DHOase family. Class I DHOase subfamily. Zn(2+) is required as a cofactor.

The enzyme catalyses (S)-dihydroorotate + H2O = N-carbamoyl-L-aspartate + H(+). Its pathway is pyrimidine metabolism; UMP biosynthesis via de novo pathway; (S)-dihydroorotate from bicarbonate: step 3/3. Its function is as follows. Catalyzes the reversible cyclization of carbamoyl aspartate to dihydroorotate. The polypeptide is Dihydroorotase (Bacillus cytotoxicus (strain DSM 22905 / CIP 110041 / 391-98 / NVH 391-98)).